The primary structure comprises 355 residues: MSTTITNSTAERKHSHVDICLRGDVAFSTITTGLERYRLRHNALPELNYDNLSTETDFLGKRIGAPLMISSMTGGYSEAAELNGKLAEAAERFQLPLGVGSMRQALEESSHRDSFAVVRRHAPTTQIFANIGAPEIAKGLSSDDLQTMIEMIRADGLIIHLNAAQELFQPEGGTDFRRVLDEVAAITAKLSVPVIAKEVGCGISAPVARQLLNAGVRVIDVAGAGGISWQKVEEARYTRRFGTDDRFSTRGLEELLNWGTPTAECLVAVNALRENPTPPFSLIASGGIQSGIDIAKSIALGADLAASAGALLRSLHSGTLEETLTTWMNDLRAAMFLTGSATIAELQNNRPISKQ.

A substrate-binding site is contributed by 12-13 (RK). FMN contacts are provided by residues S70, 71 to 73 (SMT), S101, and N130. Position 101 to 103 (101 to 103 (SMR)) interacts with substrate. Substrate is bound at residue Q165. Mg(2+) is bound at residue E166. FMN-binding positions include K197 and 308-309 (AG).

It belongs to the IPP isomerase type 2 family. As to quaternary structure, homooctamer. Dimer of tetramers. FMN is required as a cofactor. Requires NADPH as cofactor. Mg(2+) serves as cofactor.

The protein resides in the cytoplasm. The enzyme catalyses isopentenyl diphosphate = dimethylallyl diphosphate. Involved in the biosynthesis of isoprenoids. Catalyzes the 1,3-allylic rearrangement of the homoallylic substrate isopentenyl (IPP) to its allylic isomer, dimethylallyl diphosphate (DMAPP). The polypeptide is Isopentenyl-diphosphate delta-isomerase (Chlorobium phaeovibrioides (strain DSM 265 / 1930) (Prosthecochloris vibrioformis (strain DSM 265))).